The chain runs to 1010 residues: ATP-dependent DNA/RNA helicase DHX36 (1010 aa).

Residues 1–54 (MSYDYHQNWGRDGGPRSSGGGYGGSYGGSHGGGHGGNRGSGGGGGGGGGRGGRG) are required for recruitment to cytoplasmic stress granules. The tract at residues 1 to 63 (MSYDYHQNWG…GRHPGHLKGR (63 aa)) is disordered. A required for the pre-miR-134 transport region spans residues 1–107 (MSYDYHQNWG…IVQLLHSVQT (107 aa)). The interval 1-202 (MSYDYHQNWG…KKTDLRYIEM (202 aa)) is necessary for nuclear and nucleolar caps localizations. Positions 16–51 (RSSGGGYGGSYGGSHGGGHGGNRGSGGGGGGGGGRG) are enriched in gly residues. A DSM (DHX36-specific motif) region spans residues 56–78 (HPGHLKGREIGLWYAKKQGQKNK). The segment at 56–108 (HPGHLKGREIGLWYAKKQGQKNKEAERQERAVVHMDERREEQIVQLLHSVQTK) is required for G4-DNA- and G4-RNA-binding. RecA-like domain regions lie at residues 109 to 388 (NDKD…MIHI) and 389 to 630 (PGFT…DYQL). The Helicase ATP-binding domain occupies 219-389 (VNMIDNHQVT…FGNCPMIHIP (171 aa)). Residue 235–240 (GCGKTT) participates in ATP binding. The tract at residues 267 to 319 (RRISAISVAERVAAERAESCGNGNSTGYQIRLQSRLPRKQGSILYCTTGIILQ) is necessary for interaction with single-stranded DNA at the 3'-end of the G4-DNA structure. Residues 336–339 (DEIH) carry the DEAH box motif. Residues Glu337 and His339 each coordinate Mg(2+). One can recognise a Helicase C-terminal domain in the interval 479-649 (ALIRYIVLEE…ELCLQIKILR (171 aa)). The tract at residues 500–559 (WDNISTLHDLLMSQVMFKSDKFIIIPLHSLMPTVNQTQVFKRTPPGVRKIVIATNIAETS) is necessary for interaction with single-stranded DNA at the 3'-end of the G4-DNA structure. Positions 519 to 530 (DKFIIIPLHSLM) match the Nuclear localization signal motif. Residues Ser559 and 604–607 (RAGR) contribute to the ATP site. The segment at 631 to 700 (PEILRTPLEE…LGVHLARLPV (70 aa)) is WH domain. 3 necessary for interaction with single-stranded DNA at the 3'-end of the G4-DNA structure regions span residues 640-699 (ELCL…ARLP), 851-862 (NLGKKRKMVKVY), and 872-902 (HPKSVNVEQTEFNYNWLIYHLKMRTSSIYLY). An OB-fold-like subdomains region spans residues 843 to 907 (PKVAKIRLNL…SIYLYDCTEV (65 aa)). Residue Lys949 is modified to N6-acetyllysine. Ser965 carries the post-translational modification Phosphoserine.

In terms of assembly, found in a multi-helicase-TICAM1 complex at least composed of DHX36, DDX1, DDX21 and TICAM1; this complex exists in resting cells with or without dsRNA poly(I:C) ligand stimulation. Interacts (via C-terminus) with TICAM1 (via TIR domain). Interacts (via C-terminus) with DDX21; this interaction serves as bridges to TICAM1. Interacts with TERT; this interaction is dependent on the ability of DHX36 to bind to the G-quadruplex RNA (G4-RNA) structure present in the telomerase RNA template component (TERC). Interacts with DKC1; this interaction is dependent on the ability of DHX36 to bind to the G4-RNA structure present in TERC. Interacts with PARN; this interaction stimulates PARN to enhance uPA mRNA decay. Interacts with EXOSC3; this interaction occurs in a RNase-insensitive manner. Interacts with EXOSC10; this interaction occurs in a RNase-insensitive manner. Interacts with ILF3; this interaction occurs in a RNA-dependent manner. Interacts with ELAVL1; this interaction occurs in an RNA-dependent manner. Interacts with DDX5; this interaction occurs in a RNA-dependent manner. Interacts with DDX17; this interaction occurs in a RNA-dependent manner. Interacts with HDAC1; this interaction occurs in a RNA-dependent manner. Interacts with HDAC3; this interaction occurs in a RNA-dependent manner. Interacts with HDAC4. Interacts with AGO1. Interacts with AGO2. Interacts with ERCC6. The cofactor is Mg(2+).

The protein localises to the nucleus. The protein resides in the cytoplasm. It is found in the cytosol. Its subcellular location is the stress granule. It localises to the nucleus speckle. The protein localises to the chromosome. The protein resides in the telomere. It is found in the mitochondrion. Its subcellular location is the perikaryon. It localises to the cell projection. The protein localises to the dendrite. The protein resides in the axon. It carries out the reaction ATP + H2O = ADP + phosphate + H(+). Its activity is regulated as follows. ATPase activity is enhanced in the presence of homomeric poly(U) RNAs, but not by double-stranded DNA (dsDNA), double-stranded RNA (dsRNA) and tRNA. Functionally, multifunctional ATP-dependent helicase that unwinds G-quadruplex (G4) structures. Plays a role in many biological processes such as genomic integrity, gene expression regulations and as a sensor to initiate antiviral responses. G4 structures correspond to helical structures containing guanine tetrads. Binds with high affinity to and unwinds G4 structures that are formed in nucleic acids (G4-DNA and G4-RNA). Plays a role in genomic integrity. Converts the G4-RNA structure present in telomerase RNA template component (TREC) into a double-stranded RNA to promote P1 helix formation that acts as a template boundary ensuring accurate reverse transcription. Plays a role in transcriptional regulation. Resolves G4-DNA structures in promoters of genes, such as YY1, KIT/c-kit and ALPL and positively regulates their expression. Plays a role in post-transcriptional regulation. Unwinds a G4-RNA structure located in the 3'-UTR polyadenylation site of the pre-mRNA TP53 and stimulates TP53 pre-mRNA 3'-end processing in response to ultraviolet (UV)-induced DNA damage. Binds to the precursor-microRNA-134 (pre-miR-134) terminal loop and regulates its transport into the synapto-dendritic compartment. Involved in the pre-miR-134-dependent inhibition of target gene expression and the control of dendritic spine size. Plays a role in the regulation of cytoplasmic mRNA translation and mRNA stability. Binds to both G4-RNA structures and alternative non-quadruplex-forming sequence within the 3'-UTR of the PITX1 mRNA regulating negatively PITX1 protein expression. Binds to both G4-RNA structure in the 5'-UTR and AU-rich elements (AREs) localized in the 3'-UTR of NKX2-5 mRNA to either stimulate protein translation or induce mRNA decay in an ELAVL1-dependent manner, respectively. Also binds to ARE sequences present in several mRNAs mediating exosome-mediated 3'-5' mRNA degradation. Involved in cytoplasmic urokinase-type plasminogen activator (uPA) mRNA decay. Component of a multi-helicase-TICAM1 complex that acts as a cytoplasmic sensor of viral double-stranded RNA (dsRNA) and plays a role in the activation of a cascade of antiviral responses including the induction of pro-inflammatory cytokines via the adapter molecule TICAM1. Required for the early embryonic development and hematopoiesis. Involved in the regulation of cardioblast differentiation and proliferation during heart development. Involved in spermatogonia differentiation. May play a role in ossification. The polypeptide is ATP-dependent DNA/RNA helicase DHX36 (Bos taurus (Bovine)).